Here is a 338-residue protein sequence, read N- to C-terminus: Glycerol-3-phosphate dehydrogenase [NAD(P)+] (338 aa).

NADPH contacts are provided by S13, W14, and K108. Residues K108, G139, and S141 each coordinate sn-glycerol 3-phosphate. A143 provides a ligand contact to NADPH. 5 residues coordinate sn-glycerol 3-phosphate: K194, D247, S257, R258, and N259. K194 (proton acceptor) is an active-site residue. R258 lines the NADPH pocket. Residues V282 and E284 each contribute to the NADPH site.

Belongs to the NAD-dependent glycerol-3-phosphate dehydrogenase family.

The protein resides in the cytoplasm. It catalyses the reaction sn-glycerol 3-phosphate + NAD(+) = dihydroxyacetone phosphate + NADH + H(+). The catalysed reaction is sn-glycerol 3-phosphate + NADP(+) = dihydroxyacetone phosphate + NADPH + H(+). Its pathway is membrane lipid metabolism; glycerophospholipid metabolism. Functionally, catalyzes the reduction of the glycolytic intermediate dihydroxyacetone phosphate (DHAP) to sn-glycerol 3-phosphate (G3P), the key precursor for phospholipid synthesis. This is Glycerol-3-phosphate dehydrogenase [NAD(P)+] from Streptococcus pneumoniae (strain P1031).